The sequence spans 681 residues: Threonine--tRNA ligase (681 aa).

A TGS domain is found at 3–97; it reads KQIQVTLPDG…EEDVQLALLT (95 aa). Residues 279–576 are catalytic; that stretch reads DHRVLGKQLD…LIEHYAGAFP (298 aa). Zn(2+)-binding residues include cysteine 372, histidine 423, and histidine 553.

This sequence belongs to the class-II aminoacyl-tRNA synthetase family. In terms of assembly, homodimer. The cofactor is Zn(2+).

It localises to the cytoplasm. It carries out the reaction tRNA(Thr) + L-threonine + ATP = L-threonyl-tRNA(Thr) + AMP + diphosphate + H(+). Functionally, catalyzes the attachment of threonine to tRNA(Thr) in a two-step reaction: L-threonine is first activated by ATP to form Thr-AMP and then transferred to the acceptor end of tRNA(Thr). Also edits incorrectly charged L-seryl-tRNA(Thr). This Acidobacterium capsulatum (strain ATCC 51196 / DSM 11244 / BCRC 80197 / JCM 7670 / NBRC 15755 / NCIMB 13165 / 161) protein is Threonine--tRNA ligase.